The sequence spans 338 residues: tRNA N6-adenosine threonylcarbamoyltransferase (338 aa).

Residues H111 and H115 each coordinate Fe cation. Substrate contacts are provided by residues 134 to 138 (LVSGG), D167, G180, and N272. Residue D300 participates in Fe cation binding.

Belongs to the KAE1 / TsaD family. Fe(2+) serves as cofactor.

It localises to the cytoplasm. It carries out the reaction L-threonylcarbamoyladenylate + adenosine(37) in tRNA = N(6)-L-threonylcarbamoyladenosine(37) in tRNA + AMP + H(+). Functionally, required for the formation of a threonylcarbamoyl group on adenosine at position 37 (t(6)A37) in tRNAs that read codons beginning with adenine. Is involved in the transfer of the threonylcarbamoyl moiety of threonylcarbamoyl-AMP (TC-AMP) to the N6 group of A37, together with TsaE and TsaB. TsaD likely plays a direct catalytic role in this reaction. In Vibrio atlanticus (strain LGP32) (Vibrio splendidus (strain Mel32)), this protein is tRNA N6-adenosine threonylcarbamoyltransferase.